Reading from the N-terminus, the 317-residue chain is Tegument protein UL14 homolog (317 aa).

Residues 166 to 291 (IAADPHSPRS…QKWLGGIPPL (126 aa)) are disordered. Residues 182-195 (KAPEDARCGARKPG) show a composition bias toward basic and acidic residues. Over residues 198-211 (NNYTPSAQPRSQET) the composition is skewed to polar residues. 2 stretches are compositionally biased toward basic and acidic residues: residues 217–236 (ASPD…EHHS) and 249–265 (SERR…KSSE).

It belongs to the alphaherpesvirinae HHV-1 UL14 protein family.

The protein resides in the virion tegument. It is found in the host cytoplasm. It localises to the host nucleus. Its function is as follows. Contributes to the nuclear transport of the viral transcriptional activator VP16 during the early phase of infection. Therefore, participates indirectly in the regulation of the immediate-early gene expression. Additionally, seems to be important for efficient nuclear targeting of capsids. This Equus caballus (Horse) protein is Tegument protein UL14 homolog.